Reading from the N-terminus, the 353-residue chain is N-acetyl-gamma-glutamyl-phosphate reductase (353 aa).

Cysteine 157 is a catalytic residue.

Belongs to the NAGSA dehydrogenase family. Type 1 subfamily.

The protein localises to the cytoplasm. The enzyme catalyses N-acetyl-L-glutamate 5-semialdehyde + phosphate + NADP(+) = N-acetyl-L-glutamyl 5-phosphate + NADPH + H(+). It functions in the pathway amino-acid biosynthesis; L-arginine biosynthesis; N(2)-acetyl-L-ornithine from L-glutamate: step 3/4. Its function is as follows. Catalyzes the NADPH-dependent reduction of N-acetyl-5-glutamyl phosphate to yield N-acetyl-L-glutamate 5-semialdehyde. In Bordetella avium (strain 197N), this protein is N-acetyl-gamma-glutamyl-phosphate reductase.